Reading from the N-terminus, the 241-residue chain is Biosynthetic peptidoglycan transglycosylase (241 aa).

Residues 19–39 (AILAVLGVWIAGILLFSVMPV) form a helical membrane-spanning segment.

It belongs to the glycosyltransferase 51 family.

It is found in the cell inner membrane. It carries out the reaction [GlcNAc-(1-&gt;4)-Mur2Ac(oyl-L-Ala-gamma-D-Glu-L-Lys-D-Ala-D-Ala)](n)-di-trans,octa-cis-undecaprenyl diphosphate + beta-D-GlcNAc-(1-&gt;4)-Mur2Ac(oyl-L-Ala-gamma-D-Glu-L-Lys-D-Ala-D-Ala)-di-trans,octa-cis-undecaprenyl diphosphate = [GlcNAc-(1-&gt;4)-Mur2Ac(oyl-L-Ala-gamma-D-Glu-L-Lys-D-Ala-D-Ala)](n+1)-di-trans,octa-cis-undecaprenyl diphosphate + di-trans,octa-cis-undecaprenyl diphosphate + H(+). It participates in cell wall biogenesis; peptidoglycan biosynthesis. Functionally, peptidoglycan polymerase that catalyzes glycan chain elongation from lipid-linked precursors. The chain is Biosynthetic peptidoglycan transglycosylase from Cronobacter sakazakii (strain ATCC BAA-894) (Enterobacter sakazakii).